The sequence spans 912 residues: WD repeat-containing protein 44 (912 aa).

Acidic residues predominate over residues 1–14; that stretch reads MASESDTEEFFDAP. Positions 1–25 are disordered; sequence MASESDTEEFFDAPEDVHLEGGDPI. Alanine 2 is subject to N-acetylalanine. Positions 2–170 are binding activity; the sequence is ASESDTEEFF…SSTAQLNVPE (169 aa). At serine 3 the chain carries Phosphoserine. The short motif at 9-15 is the FFAT-like motif element; that stretch reads EFFDAPE. Phosphoserine occurs at positions 50, 66, 71, 81, 96, and 126. 2 disordered regions span residues 79–104 and 118–152; these read DDSL…GTEL and QEDS…KPVD. Polar residues predominate over residues 89–104; that stretch reads QSDQATASPVTAGTEL. Threonine 158 carries the phosphothreonine modification. Disordered stretches follow at residues 183–202, 207–279, 318–349, 396–422, and 457–479; these read VKES…TKDF, EVAP…PKEN, QENG…ELTD, SNDA…RLKQ, and RDEV…MPYT. An important for interaction with ARHGAP26 AND ARHGAP10 region spans residues 210–256; sequence PAKPPRQLTPEPDIVASTKKPVPARPPPPANFPPPRPPPPSRPAPPP. Threonine 218 carries the phosphothreonine modification. The segment covering 232–255 has biased composition (pro residues); that stretch reads PARPPPPANFPPPRPPPPSRPAPP. Residue serine 261 is modified to Phosphoserine. Residues 261–277 are compositionally biased toward basic and acidic residues; it reads SELEFEALKTPDLDVPK. Threonine 270 bears the Phosphothreonine mark. The segment at 333 to 346 is important for interaction with RAB11A; the sequence is VMGPQRPRSNSGRE. Residues 334 to 504 form an interaction with RAB11 region; sequence MGPQRPRSNS…DFDQIKVVQD (171 aa). Serine 341 and serine 343 each carry phosphoserine. Position 348 is a phosphothreonine (threonine 348). Serine 402, serine 469, serine 470, and serine 471 each carry phosphoserine. The span at 466-475 shows a compositional bias: acidic residues; that stretch reads DDPSSSDDEG. Phosphotyrosine is present on tyrosine 478. The stretch at 508–547 is one WD 1 repeat; the sequence is EHMGAVWTMKFSHCGRLLASAGQDNVVRIWALKNAFDYFN. The tract at residues 556–592 is disordered; the sequence is EGRVSPSPSQESLNSSKSDTDTGVCSGTDEDPDDKNA. Serine 560 and serine 564 each carry phosphoserine. A compositionally biased stretch (low complexity) spans 560 to 572; that stretch reads SPSPSQESLNSSK. WD repeat units lie at residues 604–642, 644–684, 689–728, 739–778, 783–822, and 871–912; these read GHTA…CLCC, QHID…VALW, GQTK…YHTQ, KVGR…LSMK, VNSS…SKFT, and EDAE…KNLS.

In terms of assembly, interacts with the GTP-bound form of RAB11A when membrane-associated. Interacts with GRAF1/ARHGAP26 or GRAF2/ARHGAP10; the interaction connects the endoplasmic reticulum (ER) with the endosomal tubule. Interacts (via FFAT-like motif) with VAPA (via MSP domain) or VAPB (via MSP domain); the interaction connects the ER with the endosomal tubule. Does not bind to other Rab and Rho small G proteins. Phosphorylated by ATK1; the phosphorylation stabilizes its interaction with RAB11A and RAB11B. Highly expressed in brain.

It localises to the cytoplasm. It is found in the cytosol. The protein resides in the perinuclear region. The protein localises to the endosome membrane. Its subcellular location is the golgi apparatus. It localises to the trans-Golgi network. Functionally, downstream effector for Rab11 which regulates Rab11 intracellular membrane trafficking functions such as endocytic recycling, intracellular ciliogenesis and protein export. ATK1-mediated phosphorylation of WDR44 induces binding to Rab11 which activates endocytic recycling of transferrin receptor back to the plasma membrane. When bound to Rab11, prevents the formation of the ciliogenic Rab11-Rabin8/RAB3IP-RAB11FIP3 complex, therefore inhibiting preciliary trafficking and ciliogenesis. Participates in neo-synthesized protein export by connecting the endoplasmic reticulum (ER) with the endosomal tubule via direct interactions with the integral ER proteins VAPA or VAPB and the endosomal protein GRAFs (GRAF1/ARHGAP26 or GRAF2/ARHGAP10), which facilitates the transfer of proteins such as E-cadherin, MPP14 and CFTR into a Rab8-Rab10-Rab11-dependent export route. The chain is WD repeat-containing protein 44 (WDR44) from Bos taurus (Bovine).